A 103-amino-acid chain; its full sequence is Colicin-V (103 aa).

Residues 1-15 (MRTLTLNELDSVSGG) constitute a propeptide that is removed on maturation. A disulfide bond links Cys91 and Cys102.

It is found in the secreted. In terms of biological role, colicin V kills sensitive cells by disrupting the membrane potential. Functionally, colicins are polypeptide toxins produced by, and active against E.coli and closely related bacteria. The sequence is that of Colicin-V (cvaC) from Escherichia coli.